We begin with the raw amino-acid sequence, 163 residues long: Secreted RxLR effector protein 135 (163 aa).

Residues 1–20 (MRRLYLFVLILATFLTTSHG) form the signal peptide. The RxLR-dEER motif lies at 33–45 (RGLQEEAGEDEER). The tract at residues 94-127 (KNAGKPKRQTPQIAATGPAKPKVQSPEEAAAVPG) is disordered.

Belongs to the RxLR effector family.

It localises to the secreted. The protein resides in the host nucleus. The protein localises to the host cytoplasm. In terms of biological role, secreted effector that completely suppresses the host cell death induced by cell death-inducing proteins. This is Secreted RxLR effector protein 135 from Plasmopara viticola (Downy mildew of grapevine).